We begin with the raw amino-acid sequence, 315 residues long: Gamma-hemolysin component C (315 aa).

Positions 1–29 (MLKNKILTTTLSVSLLAPLANPLLENAKA) are cleaved as a signal peptide.

This sequence belongs to the aerolysin family. Toxicity requires sequential binding and synergistic association of a class S and a class F component which form heterooligomeric complexes. HlgC (class S) associates with HlgB (class F) thus forming an CB toxin.

Toxin that seems to act by forming pores in the membrane of the cell. Has a hemolytic and a leucotoxic activity. The sequence is that of Gamma-hemolysin component C (hlgC) from Staphylococcus aureus (strain COL).